A 297-amino-acid chain; its full sequence is ClpXP adapter protein SpxH (297 aa).

This sequence belongs to the SpxH family. As to quaternary structure, interacts with Spx.

The protein localises to the cytoplasm. Adapter protein required for efficient degradation of Spx by ClpXP under non-stress conditions. Interaction with Spx stabilizes Spx and exposes the C-terminus of Spx for recognition and proteolysis by ClpXP. This chain is ClpXP adapter protein SpxH, found in Bacillus cereus (strain ZK / E33L).